The primary structure comprises 207 residues: Chloramphenicol acetyltransferase (207 aa).

His186 (proton acceptor) is an active-site residue.

This sequence belongs to the chloramphenicol acetyltransferase family. In terms of assembly, homotrimer.

It catalyses the reaction chloramphenicol + acetyl-CoA = chloramphenicol 3-acetate + CoA. This enzyme is an effector of chloramphenicol resistance in bacteria. The sequence is that of Chloramphenicol acetyltransferase (catP) from Clostridium perfringens.